The sequence spans 168 residues: Photosystem I assembly protein Ycf3 (168 aa).

3 TPR repeats span residues 35 to 68 (AFTYYRDGMSAQSEGNYAEALQNYYEAMRLEIDP), 72 to 105 (SYILYNIGLIHTSNGEHTKALEYYFRALERNPFL), and 120 to 153 (GEQAIRQGDSEIAEAWFDQAAEYWKQAIALTPGN).

The protein belongs to the Ycf3 family.

The protein resides in the plastid. It localises to the chloroplast thylakoid membrane. Essential for the assembly of the photosystem I (PSI) complex. May act as a chaperone-like factor to guide the assembly of the PSI subunits. This is Photosystem I assembly protein Ycf3 from Daucus carota (Wild carrot).